Here is a 255-residue protein sequence, read N- to C-terminus: MFKVDLNSDLGESFGAYKMGMDEEILKFVSSVNVACGFHAGDPCVMDKTLNLAKQNGVCIGAHPSYPDLLGFGRRNMQISFEEAKNYALYQLGALFGFAKAKGMKIQHFKAHGALYNMAAIDENLALALCEAVASFDENIIFLGLSNSAMNEAAKKKGLRYANEVFADRAYNDDGTLVSRKLEGALIHDENLAIKRVIKMIKESKVTSINGKEIDLKADSICVHGDNIKALEFVKKIKENLEKEQIQICALENFI.

Belongs to the LamB/PxpA family. Forms a complex composed of PxpA, PxpB and PxpC.

It carries out the reaction 5-oxo-L-proline + ATP + 2 H2O = L-glutamate + ADP + phosphate + H(+). Catalyzes the cleavage of 5-oxoproline to form L-glutamate coupled to the hydrolysis of ATP to ADP and inorganic phosphate. In Campylobacter jejuni subsp. jejuni serotype O:6 (strain 81116 / NCTC 11828), this protein is 5-oxoprolinase subunit A.